The sequence spans 306 residues: Ornithine carbamoyltransferase (306 aa).

Residues 51-54 (STRT), Gln-78, Arg-102, and 129-132 (HPCQ) each bind carbamoyl phosphate. L-ornithine-binding positions include Asn-160, Asp-223, and 227–228 (SM). Residues 263 to 264 (CL) and Arg-291 contribute to the carbamoyl phosphate site.

Belongs to the aspartate/ornithine carbamoyltransferase superfamily. OTCase family.

It is found in the cytoplasm. It catalyses the reaction carbamoyl phosphate + L-ornithine = L-citrulline + phosphate + H(+). Its pathway is amino-acid biosynthesis; L-arginine biosynthesis; L-arginine from L-ornithine and carbamoyl phosphate: step 1/3. Reversibly catalyzes the transfer of the carbamoyl group from carbamoyl phosphate (CP) to the N(epsilon) atom of ornithine (ORN) to produce L-citrulline. The protein is Ornithine carbamoyltransferase of Trichormus variabilis (strain ATCC 29413 / PCC 7937) (Anabaena variabilis).